A 370-amino-acid chain; its full sequence is MAEERQDALREFVAVTGTEEDRARFFLESAGWDLQIALASFYEDGGDEDIVTISQATPSSVSRGTAPSDNRVTSFRDLIHDQDEEEEEEEGQRFYAGGSERSGQQIVGPPRKKSPNELVDDLFKGAKEHGAVAVERVTKSPGETSKPRPFAGGGYRLGAAPEEESAYVAGERRRHSGQDVHVVLKLWKTGFSLDNGDLRSYQDPSNAQFLESIRRGEVPAELRRLAHGGQVNLDMEDHRDEDFVKPKGAFKAFTGEGQKLGSTAPQVLNTSSPAQQAENEAKASSSILINEAEPTTNIQIRLADGGRLVQKFNHSHRISDIRLFIVDARPAMAATSFVLMTTFPNKELADENQTLKEANLLNAVIVQRLT.

Residues S54–T73 form a disordered region. Phosphoserine occurs at positions 74, 102, 114, and 140. Disordered stretches follow at residues H80–N116 and T138–L157. Positions P109–P115 match the Nuclear localization signal motif. Y167 is modified (phosphotyrosine). The Nuclear localization signal motif lies at R172–H175. S176, S192, and S272 each carry phosphoserine. One can recognise an SEP domain in the interval D179–V244. The UBX domain occupies E291–R368.

It belongs to the NSFL1C family. In terms of assembly, part of a ternary complex containing STX5A, NSFL1C and VCP. NSFL1C forms a homotrimer that binds to one end of a VCP homohexamer. The complex binds to membranes enriched in phosphatidylethanolamine-containing lipids and promotes Golgi membrane fusion. Interaction with VCIP135 leads to dissociation of the complex via ATP hydrolysis by VCP. Binds ubiquitin and mono-ubiquitinated proteins via its N-terminal UBA-like domain when bound to VCP. Phosphorylated during mitosis. Phosphorylation inhibits interaction with Golgi membranes and is required for the fragmentation of the Golgi stacks during mitosis.

The protein resides in the nucleus. Its subcellular location is the golgi apparatus. The protein localises to the golgi stack. It is found in the chromosome. It localises to the cytoplasm. The protein resides in the cytoskeleton. Its subcellular location is the microtubule organizing center. The protein localises to the centrosome. In terms of biological role, reduces the ATPase activity of VCP. Necessary for the fragmentation of Golgi stacks during mitosis and for VCP-mediated reassembly of Golgi stacks after mitosis. May play a role in VCP-mediated formation of transitional endoplasmic reticulum (tER). Inhibits the activity of CTSL (in vitro). Together with UBXN2B/p37, regulates the centrosomal levels of kinase AURKA/Aurora A during mitotic progression by promoting AURKA removal from centrosomes in prophase. Also, regulates spindle orientation during mitosis. The sequence is that of NSFL1 cofactor p47 (Nsfl1c) from Mus musculus (Mouse).